A 205-amino-acid polypeptide reads, in one-letter code: Ras-related and estrogen-regulated growth inhibitor-like protein (205 aa).

Residues 1–205 (MSNFLHLKYN…NVFGKRRKSV (205 aa)) form a small GTPase-like region. GTP is bound by residues 11-18 (EKSVSVTK), 58-64 (DPCSQTQ), and 123-126 (NKRD).

It belongs to the small GTPase superfamily. Ras family.

The catalysed reaction is GTP + H2O = GDP + phosphate + H(+). Its function is as follows. Binds GDP/GTP and may possess intrinsic GTPase activity. The chain is Ras-related and estrogen-regulated growth inhibitor-like protein (RERGL) from Homo sapiens (Human).